Consider the following 152-residue polypeptide: Acidic phospholipase A2 homolog taipoxin gamma chain (152 aa).

Residues 1–19 (MHPAHLLVLLAVCVSLLGS) form the signal peptide. Intrachain disulfides connect Cys38–Cys104, Cys42–Cys46, Cys54–Cys151, Cys56–Cys72, Cys71–Cys132, Cys78–Cys125, Cys88–Cys118, and Cys111–Cys123. Asn97 is a glycosylation site (N-linked (GlcNAc...) asparagine).

It belongs to the phospholipase A2 family. Group I subfamily. D49 sub-subfamily. Heterotrimer of alpha, beta, and gamma chains; non-covalently linked. In terms of processing, contains 0.9% fucose, 2.2% mannose, 4.2% N-acetyl-D-glucosamine, 3.5% galactose, and 3.8% N-acetyl-neuraminic acid (sialic acid). In terms of tissue distribution, expressed by the venom gland.

It localises to the secreted. Functionally, heterotrimer: Snake venom phospholipase A2 (PLA2) heterotrimer that acts as a potent presynaptic neurotoxin by blocking synaptic transmission and synaptic vesicle recycling. May act by binding in a calcium-dependent fashion to neurotonal pentraxin-1 (NPTX1) and neurotonal pentraxin-2 (NPTX2), but not to neuronal pentraxin receptor (NPTXR). Also binds to taipoxin-associated calcium binding protein 49 (RCN2), a protein localized in the lumen of endoplasmic reticulum. In terms of biological role, monomer (gamma chain): Snake venom phospholipase A2 homolog that is neither toxic nor enzymatically active. Does not bind calcium. The sequence is that of Acidic phospholipase A2 homolog taipoxin gamma chain from Oxyuranus scutellatus scutellatus (Australian taipan).